A 787-amino-acid chain; its full sequence is uncharacterized protein (787 aa).

Met1 carries the post-translational modification N-acetylmethionine. Disordered stretches follow at residues 1 to 115 (MFDG…NDHK), 130 to 200 (TNPF…QRSE), and 217 to 238 (VSSG…ASQD). Residues 36–54 (VPSTIKKSTNIARTSTAET) are compositionally biased toward polar residues. At Ser63 the chain carries Phosphoserine. Residues 130-142 (TNPFTTSANSNAH) are compositionally biased toward polar residues. The segment covering 160–169 (SITTSISNNT) has biased composition (low complexity). Residues 170 to 184 (TKEEIESNNDSERDS) are compositionally biased toward basic and acidic residues. The span at 218–230 (SSGSSLSLDTSEN) shows a compositional bias: low complexity. Ser254, Ser313, Ser342, Ser345, Ser390, Ser477, Ser492, Ser546, Ser683, and Ser699 each carry phosphoserine.

Its subcellular location is the cytoplasm. This is an uncharacterized protein from Saccharomyces cerevisiae (strain ATCC 204508 / S288c) (Baker's yeast).